Consider the following 347-residue polypeptide: DNA-directed RNA polymerase subunit alpha (347 aa).

The interval 1 to 226 (MLISQRPTLS…ELFGLARELN (226 aa)) is alpha N-terminal domain (alpha-NTD). Positions 243–347 (HIASFALPID…EQDYAETEQL (105 aa)) are alpha C-terminal domain (alpha-CTD).

This sequence belongs to the RNA polymerase alpha chain family. In terms of assembly, homodimer. The RNAP catalytic core consists of 2 alpha, 1 beta, 1 beta' and 1 omega subunit. When a sigma factor is associated with the core the holoenzyme is formed, which can initiate transcription.

The catalysed reaction is RNA(n) + a ribonucleoside 5'-triphosphate = RNA(n+1) + diphosphate. DNA-dependent RNA polymerase catalyzes the transcription of DNA into RNA using the four ribonucleoside triphosphates as substrates. The polypeptide is DNA-directed RNA polymerase subunit alpha (Mycobacterium bovis (strain ATCC BAA-935 / AF2122/97)).